Reading from the N-terminus, the 90-residue chain is MKKKGGRKIFGFMVKEEKEENRGSVEFQVFSFTNKIRRLASHLELHKKDFSSERGLRRLLGKRRRLLAYLAKKNRVRYKKLIGQLNIREQ.

It belongs to the universal ribosomal protein uS15 family. In terms of assembly, part of the 30S ribosomal subunit.

Its subcellular location is the plastid. The protein localises to the chloroplast. The sequence is that of Small ribosomal subunit protein uS15c (rps15) from Secale cereale (Rye).